Reading from the N-terminus, the 233-residue chain is MKKTIMASSLAVALGVTGYAAGTGHQAHAAEVNVDQAHLVDLAHNHQDQLNAAPIKDGAYDIHFVKDGFQYNFTSNGTTWSWSYEAANGQTAGFSNVAGADYTTSYNQGSNVQSVSYNAQSSNSNVEAVSAPTYHNYSTSTTSSSVRLSNGNTAGATGSSAAQIMAQRTGVSASTWAAIIARESNGQVNAYNPSGASGLFQTMPGWGPTNTVDQQINAAVKAYKAQGLGAWGF.

Residues 1–29 (MKKTIMASSLAVALGVTGYAAGTGHQAHA) form the signal peptide.

Belongs to the transglycosylase family. IsaA subfamily.

Its subcellular location is the secreted. Is able to cleave peptidoglycan. This is Probable transglycosylase IsaA (isaA) from Staphylococcus aureus (strain USA300).